The following is a 66-amino-acid chain: Large ribosomal subunit protein bL35 (66 aa).

It belongs to the bacterial ribosomal protein bL35 family.

This is Large ribosomal subunit protein bL35 from Phenylobacterium zucineum (strain HLK1).